We begin with the raw amino-acid sequence, 133 residues long: Hexon-interlacing protein (133 aa).

The stretch at 97–127 (REEDALSVVLTRMEELSQQLQDLFAKVALLN) forms a coiled coil.

The protein belongs to the adenoviridae hexon-interlacing protein family. As to quaternary structure, homotrimer. Interacts with hexon protein; this interaction tethers the hexons together. Self-interacts with adjacent proteins. Interacts with kinesin light chain KLC1; this interaction leads to capsid disruption at the nuclear pore complex during virus entry into host cell.

The protein localises to the virion. The protein resides in the host nucleus. Functionally, structural component of the virion that acts as a cement protein on the capsid exterior and forms triskelion structures consisting of three molecules that stabilize three hexon trimers at the center of each icosahedral facet and fixes the peripentonal hexons. Dispensable for assembly. During virus entry, recruits the anterograde motor kinesin-1 to the capsid docked at the nuclear pore complex thereby subjecting the docked capsid to a pulling force. The resulting tension leads to capsid disruption, dispersion of capsid fragments toward cell periphery and eventually viral DNA entry into the host nucleus. The chain is Hexon-interlacing protein from Homo sapiens (Human).